A 338-amino-acid chain; its full sequence is Aspartate-semialdehyde dehydrogenase (338 aa).

NADP(+) contacts are provided by residues 13 to 16 (SGAV) and 41 to 42 (RS). Arg-101 contributes to the phosphate binding site. Catalysis depends on Cys-132, which acts as the Acyl-thioester intermediate. Gln-159 lines the substrate pocket. Residue 162 to 163 (SG) coordinates NADP(+). Lys-216 serves as a coordination point for phosphate. Substrate is bound at residue Arg-238. His-245 serves as the catalytic Proton acceptor. An NADP(+)-binding site is contributed by Asn-317.

Belongs to the aspartate-semialdehyde dehydrogenase family. As to quaternary structure, homodimer.

The catalysed reaction is L-aspartate 4-semialdehyde + phosphate + NADP(+) = 4-phospho-L-aspartate + NADPH + H(+). It participates in amino-acid biosynthesis; L-lysine biosynthesis via DAP pathway; (S)-tetrahydrodipicolinate from L-aspartate: step 2/4. It functions in the pathway amino-acid biosynthesis; L-methionine biosynthesis via de novo pathway; L-homoserine from L-aspartate: step 2/3. The protein operates within amino-acid biosynthesis; L-threonine biosynthesis; L-threonine from L-aspartate: step 2/5. In terms of biological role, catalyzes the NADPH-dependent formation of L-aspartate-semialdehyde (L-ASA) by the reductive dephosphorylation of L-aspartyl-4-phosphate. The chain is Aspartate-semialdehyde dehydrogenase from Shewanella violacea (strain JCM 10179 / CIP 106290 / LMG 19151 / DSS12).